The following is a 536-amino-acid chain: SNW domain-containing protein 1 (536 aa).

The disordered stretch occupies residues 1-44; that stretch reads MALTSFLPAPTQLSQDQLEAEERARSQRSLQTSLVSSRREPPPY. N-acetylalanine is present on Ala-2. Ser-14 is modified (phosphoserine). Over residues 27–36 the composition is skewed to polar residues; it reads QRSLQTSLVS. Residues 59–79 are interaction with PPIL1; the sequence is GDGGAFPEIHVAQYPLDMGRK. Glycyl lysine isopeptide (Lys-Gly) (interchain with G-Cter in SUMO2) cross-links involve residues Lys-81, Lys-97, Lys-115, Lys-122, Lys-141, Lys-158, and Lys-170. An SNW region spans residues 174–339; the sequence is AQYIRYTPSQ…KARERRAGIK (166 aa). A phosphoserine mark is found at Ser-182 and Ser-190. Lys-193 participates in a covalent cross-link: Glycyl lysine isopeptide (Lys-Gly) (interchain with G-Cter in SUMO2). The segment at 212-233 is disordered; that stretch reads FKINKKIPRGPPSPPAPVMHSP. Phosphoserine is present on residues Ser-224, Ser-232, and Ser-234. Residues Lys-240, Lys-258, Lys-286, Lys-339, Lys-344, Lys-416, and Lys-441 each participate in a glycyl lysine isopeptide (Lys-Gly) (interchain with G-Cter in SUMO2) cross-link. Positions 311–386 are disordered; that stretch reads KMAQKEKEKH…RSKLQRNENR (76 aa). Residue Ser-446 is modified to Phosphoserine. Residue Lys-452 forms a Glycyl lysine isopeptide (Lys-Gly) (interchain with G-Cter in SUMO2) linkage. Composition is skewed to basic and acidic residues over residues 467-489 and 503-530; these read IKTN…RGRE and KFLE…EHEG. A disordered region spans residues 467–536; the sequence is IKTNRFVPDK…EHEGKKRRKE (70 aa). Residues Ser-479 and Ser-481 each carry the phosphoserine modification. A Glycyl lysine isopeptide (Lys-Gly) (interchain with G-Cter in SUMO2) cross-link involves residue Lys-509.

Belongs to the SNW family. In terms of assembly, identified in the spliceosome C complex. Associates with U4/U6-U5 tri-small nuclear ribonucleoproteins (U4/U6-U5 tri-snRNPs). Component of the minor spliceosome, which splices U12-type introns. Interacts with SKI, SMAD2,SMAD3, RBPJ, RB1, PABPN1, MAGEA1, SIRT1, FOXN3, U2AF2, PPIL1, DAXX and ATP1B4. Interacts with VDR and RXRA; preferentially associates with VDR:RXRA heterodimers. Interacts with NCOR2. Interacts with MAML1. Interacts with NOTCH1 NICD; the interaction involves multimerized NOTCH1 NICD. Forms a complex with NOTCH1 NICD and MAML1; the association is dissociated by RBPJ. Associates with positive transcription elongation factor b (P-TEFb). Component of the SNARP complex which consists at least of SNIP1, SNW1, THRAP3, BCLAF1 and PNN.

It localises to the nucleus. In terms of biological role, involved in pre-mRNA splicing as component of the spliceosome. As a component of the minor spliceosome, involved in the splicing of U12-type introns in pre-mRNAs. Required in the specific splicing of CDKN1A pre-mRNA; the function probably involves the recruitment of U2AF2 to the mRNA. May recruit PPIL1 to the spliceosome. May be involved in cyclin-D1/CCND1 mRNA stability through the SNARP complex which associates with both the 3'end of the CCND1 gene and its mRNA. Involved in transcriptional regulation. Modulates TGF-beta-mediated transcription via association with SMAD proteins, MYOD1-mediated transcription via association with PABPN1, RB1-mediated transcriptional repression, and retinoid-X receptor (RXR)- and vitamin D receptor (VDR)-dependent gene transcription in a cell line-specific manner probably involving coactivators NCOA1 and GRIP1. Is involved in NOTCH1-mediated transcriptional activation. Binds to multimerized forms of Notch intracellular domain (NICD) and is proposed to recruit transcriptional coactivators such as MAML1 to form an intermediate preactivation complex which associates with DNA-bound CBF-1/RBPJ to form a transcriptional activation complex by releasing SNW1 and redundant NOTCH1 NICD. In Mus musculus (Mouse), this protein is SNW domain-containing protein 1 (Snw1).